Consider the following 136-residue polypeptide: uncharacterized protein (136 aa).

An N-terminal signal peptide occupies residues 1–19 (MMTAAKRLGLYSALRACSA). A helical transmembrane segment spans residues 75 to 97 (FWFSHTCLVFGSNTILFASLNSF).

Its subcellular location is the membrane. This is an uncharacterized protein from Saccharomyces cerevisiae (strain ATCC 204508 / S288c) (Baker's yeast).